Consider the following 200-residue polypeptide: 3-isopropylmalate dehydratase small subunit (200 aa).

The protein belongs to the LeuD family. LeuD type 1 subfamily. In terms of assembly, heterodimer of LeuC and LeuD.

The catalysed reaction is (2R,3S)-3-isopropylmalate = (2S)-2-isopropylmalate. The protein operates within amino-acid biosynthesis; L-leucine biosynthesis; L-leucine from 3-methyl-2-oxobutanoate: step 2/4. In terms of biological role, catalyzes the isomerization between 2-isopropylmalate and 3-isopropylmalate, via the formation of 2-isopropylmaleate. This chain is 3-isopropylmalate dehydratase small subunit, found in Vibrio vulnificus (strain YJ016).